Consider the following 307-residue polypeptide: MLYDRFGRPVTNLRISLTQECNYRCFFCHREGQRFLAKNELTPEEIERLVRIASRLGIRKVKLTGGEPTVREDILEIVKRIKPYVIDLSMTTNGSRLKELAKPLAKAGLDRVNVSLHSLKPEVYKRITGVDGLEAVLEGIEEAVKYLSPVKLNMTVMKGLNDGEIWDMVEFAAKTGTILQLIELEAPREMAETAFFRKYFYPLKPVEEKLEKLAVETKERRMHRRKKYFIPTDYGIAEVEVVRAMHNTVFCANCTRLRVTSDGKFKTCLLRNNDLIDFLSAMRNGASDEEIVEIFKRAVLMREPYWK.

In terms of domain architecture, Radical SAM core spans 5-231; it reads RFGRPVTNLR…MHRRKKYFIP (227 aa). Arg-14 lines the GTP pocket. [4Fe-4S] cluster contacts are provided by Cys-21, Cys-25, and Cys-28. GTP is bound at residue Lys-62. S-adenosyl-L-methionine is bound at residue Gly-66. Position 91 (Thr-91) interacts with GTP. Residue Ser-115 coordinates S-adenosyl-L-methionine. Lys-151 lines the GTP pocket. Residue Met-190 participates in S-adenosyl-L-methionine binding. Residues Cys-251 and Cys-254 each contribute to the [4Fe-4S] cluster site. 256-258 is a GTP binding site; it reads RLR. Cys-268 serves as a coordination point for [4Fe-4S] cluster.

This sequence belongs to the radical SAM superfamily. MoaA family. Requires [4Fe-4S] cluster as cofactor.

It carries out the reaction GTP + AH2 + S-adenosyl-L-methionine = (8S)-3',8-cyclo-7,8-dihydroguanosine 5'-triphosphate + 5'-deoxyadenosine + L-methionine + A + H(+). The protein operates within cofactor biosynthesis; molybdopterin biosynthesis. Catalyzes the cyclization of GTP to (8S)-3',8-cyclo-7,8-dihydroguanosine 5'-triphosphate. In Thermococcus kodakarensis (strain ATCC BAA-918 / JCM 12380 / KOD1) (Pyrococcus kodakaraensis (strain KOD1)), this protein is Probable GTP 3',8-cyclase.